A 213-amino-acid chain; its full sequence is Orotate phosphoribosyltransferase (213 aa).

Residue K26 coordinates 5-phospho-alpha-D-ribose 1-diphosphate. 34 to 35 is an orotate binding site; that stretch reads FF. Residues 72 to 73, R99, K100, K103, H105, and 124 to 132 contribute to the 5-phospho-alpha-D-ribose 1-diphosphate site; these read YK and DDVITAGTA. Residues T128 and R156 each coordinate orotate.

Belongs to the purine/pyrimidine phosphoribosyltransferase family. PyrE subfamily. Homodimer. Mg(2+) serves as cofactor.

The enzyme catalyses orotidine 5'-phosphate + diphosphate = orotate + 5-phospho-alpha-D-ribose 1-diphosphate. It functions in the pathway pyrimidine metabolism; UMP biosynthesis via de novo pathway; UMP from orotate: step 1/2. Functionally, catalyzes the transfer of a ribosyl phosphate group from 5-phosphoribose 1-diphosphate to orotate, leading to the formation of orotidine monophosphate (OMP). The chain is Orotate phosphoribosyltransferase from Pseudomonas paraeruginosa (strain DSM 24068 / PA7) (Pseudomonas aeruginosa (strain PA7)).